A 94-amino-acid chain; its full sequence is Acylphosphatase (94 aa).

An Acylphosphatase-like domain is found at 8–94; that stretch reads TLFIIVHGKV…GRRFKHFAQH (87 aa). Catalysis depends on residues R23 and N41. A disordered region spans residues 69–94; the sequence is PPAASVTELESRREDGGRRFKHFAQH. A compositionally biased stretch (basic and acidic residues) spans 77-86; sequence LESRREDGGR.

This sequence belongs to the acylphosphatase family.

It carries out the reaction an acyl phosphate + H2O = a carboxylate + phosphate + H(+). The protein is Acylphosphatase (acyP) of Bordetella avium (strain 197N).